The sequence spans 617 residues: 1-deoxy-D-xylulose-5-phosphate synthase (617 aa).

Thiamine diphosphate contacts are provided by residues His-76 and 117–119 (GHS). A Mg(2+)-binding site is contributed by Asp-148. Residues 149-150 (GA), Asn-177, Tyr-285, and Glu-366 each bind thiamine diphosphate. Asn-177 contributes to the Mg(2+) binding site.

This sequence belongs to the transketolase family. DXPS subfamily. Homodimer. The cofactor is Mg(2+). Thiamine diphosphate serves as cofactor.

The enzyme catalyses D-glyceraldehyde 3-phosphate + pyruvate + H(+) = 1-deoxy-D-xylulose 5-phosphate + CO2. It participates in metabolic intermediate biosynthesis; 1-deoxy-D-xylulose 5-phosphate biosynthesis; 1-deoxy-D-xylulose 5-phosphate from D-glyceraldehyde 3-phosphate and pyruvate: step 1/1. Catalyzes the acyloin condensation reaction between C atoms 2 and 3 of pyruvate and glyceraldehyde 3-phosphate to yield 1-deoxy-D-xylulose-5-phosphate (DXP). The polypeptide is 1-deoxy-D-xylulose-5-phosphate synthase (Mannheimia succiniciproducens (strain KCTC 0769BP / MBEL55E)).